Consider the following 80-residue polypeptide: Peroxidase (80 aa).

The disordered stretch occupies residues 56–80 (DANEAEANSDLPGFNSSRSELEAAF). Residue proline 67 participates in substrate binding. N-linked (GlcNAc...) asparagine glycosylation occurs at asparagine 70.

The protein belongs to the peroxidase family. Classical plant (class III) peroxidase subfamily. Requires Ca(2+) as cofactor. Heme b serves as cofactor.

It carries out the reaction 2 a phenolic donor + H2O2 = 2 a phenolic radical donor + 2 H2O. Removal of H(2)O(2), oxidation of toxic reductants, biosynthesis and degradation of lignin, suberization, auxin catabolism, response to environmental stresses such as wounding, pathogen attack and oxidative stress. These functions might be dependent on each isozyme/isoform in each plant tissue. The chain is Peroxidase from Triticum aestivum (Wheat).